The chain runs to 190 residues: Elongation factor P (190 aa).

It belongs to the elongation factor P family.

It is found in the cytoplasm. It functions in the pathway protein biosynthesis; polypeptide chain elongation. In terms of biological role, involved in peptide bond synthesis. Stimulates efficient translation and peptide-bond synthesis on native or reconstituted 70S ribosomes in vitro. Probably functions indirectly by altering the affinity of the ribosome for aminoacyl-tRNA, thus increasing their reactivity as acceptors for peptidyl transferase. This chain is Elongation factor P, found in Amoebophilus asiaticus (strain 5a2).